The primary structure comprises 119 residues: MNLEAYFPVLLFIVVGVGLGLALMTIGRVLGPNNPDPDKLSPYECGFEAFEDARMKFDVRYYLIAILFILFDLETAFLFPWGVALREIGWPGFFAMGVFLLEFLVGFVYIWKKGALDWE.

3 consecutive transmembrane segments (helical) span residues Phe-7–Gly-27, Leu-63–Val-83, and Ile-88–Val-108.

Belongs to the complex I subunit 3 family. As to quaternary structure, NDH-1 is composed of 14 different subunits. Subunits NuoA, H, J, K, L, M, N constitute the membrane sector of the complex.

It localises to the cell inner membrane. It catalyses the reaction a quinone + NADH + 5 H(+)(in) = a quinol + NAD(+) + 4 H(+)(out). Its function is as follows. NDH-1 shuttles electrons from NADH, via FMN and iron-sulfur (Fe-S) centers, to quinones in the respiratory chain. The immediate electron acceptor for the enzyme in this species is believed to be ubiquinone. Couples the redox reaction to proton translocation (for every two electrons transferred, four hydrogen ions are translocated across the cytoplasmic membrane), and thus conserves the redox energy in a proton gradient. The polypeptide is NADH-quinone oxidoreductase subunit A (Ralstonia pickettii (strain 12J)).